Consider the following 299-residue polypeptide: dTDP-4-dehydrorhamnose reductase (299 aa).

Residues 10–12, Asp30, 39–40, and 63–65 contribute to the NADH site; these read GQV, DF, and AHT. 11–12 is an NADPH binding site; that stretch reads QV. Residues 39–40, 63–65, and Tyr102 contribute to the NADPH site; these read DF and AHT. 104 to 105 contacts dTDP-beta-L-rhamnose; it reads TD. The NADH site is built by Tyr128 and Lys132. Positions 128 and 132 each coordinate NADPH. The Proton donor/acceptor role is filled by Tyr128. A dTDP-beta-L-rhamnose-binding site is contributed by Trp153.

This sequence belongs to the dTDP-4-dehydrorhamnose reductase family. Homodimer. The cofactor is Mg(2+).

The catalysed reaction is dTDP-beta-L-rhamnose + NADP(+) = dTDP-4-dehydro-beta-L-rhamnose + NADPH + H(+). Its pathway is carbohydrate biosynthesis; dTDP-L-rhamnose biosynthesis. It functions in the pathway bacterial outer membrane biogenesis; LPS O-antigen biosynthesis. Involved in the biosynthesis of the dTDP-L-rhamnose which is an important component of lipopolysaccharide (LPS). Catalyzes the reduction of dTDP-6-deoxy-L-lyxo-4-hexulose to yield dTDP-L-rhamnose. RmlD uses NADH and NADPH nearly equally well. The chain is dTDP-4-dehydrorhamnose reductase (rfbD) from Salmonella typhimurium (strain LT2 / SGSC1412 / ATCC 700720).